A 280-amino-acid chain; its full sequence is Type II restriction enzyme MboI (280 aa).

The protein belongs to the DpnII type II restriction endonuclease family.

The enzyme catalyses Endonucleolytic cleavage of DNA to give specific double-stranded fragments with terminal 5'-phosphates.. In terms of biological role, a P subtype restriction enzyme that recognizes the double-stranded unmethylated sequence 5'-GATC-3' and cleaves before G-1. The sequence is that of Type II restriction enzyme MboI (mboIR) from Moraxella bovis.